A 152-amino-acid polypeptide reads, in one-letter code: SKP1-like protein 8 (152 aa).

The interval Thr94 to Glu152 is interaction with the F-box domain of F-box proteins.

It belongs to the SKP1 family. Part of a SCF (SKP1-cullin-F-box) protein ligase complex. Restricted to siliques.

It localises to the nucleus. The protein operates within protein modification; protein ubiquitination. In terms of biological role, involved in ubiquitination and subsequent proteasomal degradation of target proteins. Together with CUL1, RBX1 and a F-box protein, it forms a SCF E3 ubiquitin ligase complex. The functional specificity of this complex depends on the type of F-box protein. In the SCF complex, it serves as an adapter that links the F-box protein to CUL1. The protein is SKP1-like protein 8 (ASK8) of Arabidopsis thaliana (Mouse-ear cress).